We begin with the raw amino-acid sequence, 819 residues long: DNA topoisomerase 4 subunit A (819 aa).

The region spanning Leu30 to Leu496 is the Topo IIA-type catalytic domain. Catalysis depends on Tyr118, which acts as the O-(5'-phospho-DNA)-tyrosine intermediate.

The protein belongs to the type II topoisomerase GyrA/ParC subunit family. ParC type 2 subfamily. Heterotetramer composed of ParC and ParE.

The protein resides in the cell membrane. The catalysed reaction is ATP-dependent breakage, passage and rejoining of double-stranded DNA.. Functionally, topoisomerase IV is essential for chromosome segregation. It relaxes supercoiled DNA. Performs the decatenation events required during the replication of a circular DNA molecule. In Streptococcus pyogenes serotype M6 (strain ATCC BAA-946 / MGAS10394), this protein is DNA topoisomerase 4 subunit A.